The sequence spans 308 residues: Glycosyltransferase 6 domain-containing protein 1 (308 aa).

The Cytoplasmic segment spans residues 1–6 (MNSKRM). A helical; Signal-anchor for type II membrane protein membrane pass occupies residues 7–23 (LLLVLFAFSLMLVERYF). Topologically, residues 24–308 (RNHQVEELRL…KVAHDSHRKL (285 aa)) are lumenal. Asn74 carries an N-linked (GlcNAc...) asparagine glycan. Substrate contacts are provided by residues 82–87 (FATGRF), 173–175 (AVN), and 195–198 (HAWW). The active-site Nucleophile is the Glu263.

It belongs to the glycosyltransferase 6 family. Mn(2+) serves as cofactor.

The protein localises to the membrane. This chain is Glycosyltransferase 6 domain-containing protein 1 (GLT6D1), found in Macaca fascicularis (Crab-eating macaque).